The following is a 137-amino-acid chain: Acidic phospholipase A2 Vur-PL3 (137 aa).

The signal sequence occupies residues 1-16 (MRTLWIVAVCLIGVEG). 7 disulfides stabilise this stretch: Cys42-Cys131, Cys44-Cys60, Cys59-Cys111, Cys65-Cys137, Cys66-Cys104, Cys73-Cys97, and Cys91-Cys102. Residues Tyr43, Gly45, and Gly47 each coordinate Ca(2+). His63 is an active-site residue. Asp64 contributes to the Ca(2+) binding site. Asp105 is an active-site residue.

Ca(2+) serves as cofactor. As to expression, expressed by the venom gland.

Its subcellular location is the secreted. It catalyses the reaction a 1,2-diacyl-sn-glycero-3-phosphocholine + H2O = a 1-acyl-sn-glycero-3-phosphocholine + a fatty acid + H(+). The protein is Acidic phospholipase A2 Vur-PL3 of Vipera renardi (Steppe viper).